Reading from the N-terminus, the 504-residue chain is Maturase K (504 aa).

Belongs to the intron maturase 2 family. MatK subfamily.

It is found in the plastid. The protein localises to the chloroplast. Its function is as follows. Usually encoded in the trnK tRNA gene intron. Probably assists in splicing its own and other chloroplast group II introns. This is Maturase K from Cucumis sativus (Cucumber).